A 302-amino-acid chain; its full sequence is Methionyl-tRNA formyltransferase (302 aa).

109 to 112 is a (6S)-5,6,7,8-tetrahydrofolate binding site; it reads SILP.

It belongs to the Fmt family.

It catalyses the reaction L-methionyl-tRNA(fMet) + (6R)-10-formyltetrahydrofolate = N-formyl-L-methionyl-tRNA(fMet) + (6S)-5,6,7,8-tetrahydrofolate + H(+). In terms of biological role, attaches a formyl group to the free amino group of methionyl-tRNA(fMet). The formyl group appears to play a dual role in the initiator identity of N-formylmethionyl-tRNA by promoting its recognition by IF2 and preventing the misappropriation of this tRNA by the elongation apparatus. This chain is Methionyl-tRNA formyltransferase, found in Campylobacter hominis (strain ATCC BAA-381 / DSM 21671 / CCUG 45161 / LMG 19568 / NCTC 13146 / CH001A).